The primary structure comprises 125 residues: MNKEEIIQAIKEMKVTELVELVKALEEEFGVSAAMPVAAVGSPVAGAAAAAPVEEKTTFDVILKDAGANKIKVLKVVREITGLGLKEAKDLVDSTPKPIKEGVSKQEAEEIKAKLEAEGAVVEIK.

The protein belongs to the bacterial ribosomal protein bL12 family. Homodimer. Part of the ribosomal stalk of the 50S ribosomal subunit. Forms a multimeric L10(L12)X complex, where L10 forms an elongated spine to which 2 to 4 L12 dimers bind in a sequential fashion. Binds GTP-bound translation factors.

Functionally, forms part of the ribosomal stalk which helps the ribosome interact with GTP-bound translation factors. Is thus essential for accurate translation. This is Large ribosomal subunit protein bL12 from Dictyoglomus thermophilum (strain ATCC 35947 / DSM 3960 / H-6-12).